A 406-amino-acid chain; its full sequence is RILP-like protein 1 (406 aa).

In terms of domain architecture, RH1 spans 5–99 (QLGAALDKSA…LEKEKKHKKE (95 aa)). Residues 105-319 (DVWRGEAQDL…KVFMLQEEIA (215 aa)) adopt a coiled-coil conformation. Disordered stretches follow at residues 234-272 (EVSS…PAQE) and 323-351 (SEEQ…NFQP). The span at 241–257 (EVSRLKEKLKEQSRSNE) shows a compositional bias: basic and acidic residues. Residues 289–358 (RPRFTLQELR…FQPESGIKRL (70 aa)) enclose the RH2 domain. Residues 340 to 351 (TLRTNPRSNFQP) are compositionally biased toward polar residues.

It belongs to the RILPL family.

Its subcellular location is the cytoplasm. The protein localises to the cytosol. The protein resides in the cytoskeleton. It is found in the microtubule organizing center. It localises to the centrosome. Its subcellular location is the cell projection. The protein localises to the cilium. Functionally, plays a role in the regulation of cell shape and polarity. Plays a role in cellular protein transport, including protein transport away from primary cilia. Neuroprotective protein. The sequence is that of RILP-like protein 1 (rilpl1) from Danio rerio (Zebrafish).